The following is a 328-amino-acid chain: Thiamine-monophosphate kinase (328 aa).

Mg(2+) contacts are provided by Asp30, Thr45, Thr46, and Asp47. His54 serves as a coordination point for substrate. Residues Asp75 and Asp122 each coordinate Mg(2+). Residues 121–122 (GD) and Arg146 each bind ATP. Asp211 is a binding site for Mg(2+). Residue Ser213 coordinates ATP. Asp214 lines the Mg(2+) pocket. Residues Glu262 and Phe321 each coordinate substrate.

It belongs to the thiamine-monophosphate kinase family.

It catalyses the reaction thiamine phosphate + ATP = thiamine diphosphate + ADP. The protein operates within cofactor biosynthesis; thiamine diphosphate biosynthesis; thiamine diphosphate from thiamine phosphate: step 1/1. Its function is as follows. Catalyzes the ATP-dependent phosphorylation of thiamine-monophosphate (TMP) to form thiamine-pyrophosphate (TPP), the active form of vitamin B1. The chain is Thiamine-monophosphate kinase from Haemophilus influenzae (strain ATCC 51907 / DSM 11121 / KW20 / Rd).